We begin with the raw amino-acid sequence, 316 residues long: Small ribosomal subunit biogenesis GTPase RsgA (316 aa).

Residues 83 to 248 (DQYKSKLFAA…LIDSPGFQEF (166 aa)) form the CP-type G domain. Residues 131–134 (NKTD) and 185–193 (GQSGMGKST) each bind GTP. Cys-272, Cys-277, His-279, and Cys-285 together coordinate Zn(2+).

The protein belongs to the TRAFAC class YlqF/YawG GTPase family. RsgA subfamily. As to quaternary structure, monomer. Associates with 30S ribosomal subunit, binds 16S rRNA. The cofactor is Zn(2+).

Its subcellular location is the cytoplasm. Its function is as follows. One of several proteins that assist in the late maturation steps of the functional core of the 30S ribosomal subunit. Helps release RbfA from mature subunits. May play a role in the assembly of ribosomal proteins into the subunit. Circularly permuted GTPase that catalyzes slow GTP hydrolysis, GTPase activity is stimulated by the 30S ribosomal subunit. In Paraburkholderia phytofirmans (strain DSM 17436 / LMG 22146 / PsJN) (Burkholderia phytofirmans), this protein is Small ribosomal subunit biogenesis GTPase RsgA.